The chain runs to 578 residues: Octopamine receptor 2 (578 aa).

Topologically, residues 1-84 (MMSFPIALFA…YDSITIFITV (84 aa)) are extracellular. N-linked (GlcNAc...) asparagine glycosylation is found at asparagine 13, asparagine 38, asparagine 46, and asparagine 59. The helical transmembrane segment at 85 to 107 (AVVLTLITLWTILGNFFVLMALY) threads the bilayer. Topologically, residues 108 to 117 (RYGTLRTMSN) are cytoplasmic. Residues 118-139 (CLIGNLAISDLLLAVTVLPIST) traverse the membrane as a helical segment. The Extracellular segment spans residues 140-156 (VHDLLGYWVFGEFTCTL). Cysteine 154 and cysteine 239 are joined by a disulfide. The chain crosses the membrane as a helical span at residues 157–177 (WLCMDVLYCTASIWGLCTVAF). The Cytoplasmic portion of the chain corresponds to 178–197 (DRYLATVYPVWYHDQRSVRK). A helical membrane pass occupies residues 198–220 (AVGCIVFVWIFSIVISFAPFIGW). The Extracellular segment spans residues 221–251 (QHMIPSFFSFNASIQRYQCILFTSSSYVLYS). The N-linked (GlcNAc...) asparagine glycan is linked to asparagine 231. The helical transmembrane segment at 252–272 (SMGSFVIPAILMAFMYVRIFV) threads the bilayer. At 273 to 495 (VLHNQSRGVK…ELREQRATKR (223 aa)) the chain is on the cytoplasmic side. The helical transmembrane segment at 496–517 (MLLIMACFCVCWMPFLFMYILR) threads the bilayer. The Extracellular segment spans residues 518-531 (SVCDTCHMNQHFVA). A helical transmembrane segment spans residues 532–553 (AIIWLGYVNSSLNPVLYTLFND). Over 554–578 (DFKVAFKRLIGARSPSAYRSPGPRR) the chain is Cytoplasmic.

This sequence belongs to the G-protein coupled receptor 1 family.

It is found in the cell membrane. In terms of biological role, receptor for octopamine. Octopamine (OA) is a neurotransmitter, neurohormone, and neuromodulator in invertebrates. This receptor induces a long lasting opening of voltage- independent chloride channels, a process which seems to involve protein phosphorylation but does not require either cAPK or PKC. The rank order of potency for agonists is p-synephrine &gt; p-octopamine &gt; xylometazoline &gt; B-HT920 &gt; norepinephrine = clonidine &gt; epinephrine &gt; p-tyramine &gt; phenylephrine = oxymetazoline = mehoxamine = dopamine &gt; serotonin &gt; histamine. For antagonists, the rank order is rauwolscine = mianserin &gt; phentolamine &gt; chlorpromazine &gt; spiperone &gt; yohimbine &gt; propanolol &gt; alprenolol &gt; prazosine &gt; pindolol. The sequence is that of Octopamine receptor 2 from Lymnaea stagnalis (Great pond snail).